The primary structure comprises 657 residues: Zinc finger protein 630 (657 aa).

The region spanning 8 to 79 (VTFEDVAVDF…ESELSRWIYP (72 aa)) is the KRAB domain. 2 consecutive C2H2-type zinc fingers follow at residues 263 to 285 (NVCS…QRIH) and 291 to 313 (YVCG…QRIH). The C2H2-type 3; degenerate zinc-finger motif lies at 319-341 (YECTKYGRAFSRKSPFTVHQRVH). 9 C2H2-type zinc fingers span residues 347-369 (YECF…QRVH), 375-397 (FECS…QITH), 403-425 (YECT…QRTH), 431-453 (YKCG…QRIH), 459-481 (YVCT…QRLH), 487-509 (YMCT…QRIH), 515-537 (YQCG…LRVH), 543-565 (YECT…QRGH), and 571-593 (YECS…QKTH). Residues 599–621 (PECAESGMTFFWKSQMITYQRRH) form a C2H2-type 13; degenerate zinc finger. The C2H2-type 14; degenerate zinc finger occupies 627–649 (SRCSDCGKAFCQHVYFTGHQNPY).

It belongs to the krueppel C2H2-type zinc-finger protein family.

The protein localises to the nucleus. In terms of biological role, may be involved in transcriptional regulation. This Homo sapiens (Human) protein is Zinc finger protein 630 (ZNF630).